Reading from the N-terminus, the 586-residue chain is MSQSSIIVVGGGLAGLMATIKAAESGMAVKLFSIVPVKRSHSVCAQGGINGAVNTKGEGDSPWEHFDDTVYGGDFLANQPPVKAMCEAAPSIIHLLDRMGVMFNRTPEGLLDFRRFGGTQHHRTAYAGATTGQQLLYALDEQVRRYEVAGLVTKYEGWEFLGAVLDDDRTCRGIVAQNLTNMQIESFRSDAVIMATGGPGIIFGKSTNSMINTGSAASIVYQQGAYYANGEFIQIHPTAIPGDDKLRLMSESARGEGGRVWTYKDGKPWYFLEEKYPAYGNLVPRDIATREIFDVCVNQKLGINGENMVYLDLSHKDPKELDIKLGGIIEIYEKFMGDDPRKLPMKIFPAVHYSMGGLWVDYDQMTNIPGLFAAGECDYSMHGGNRLGANSLLSAIYGGMVAGPNAVKYVNGLESSAEDMSSSLFDAHVKKEEEKWADIMSMDGTENAYVLHKELGEWMTANVTVVRHNDKLLKTDDKIQELMERFKKININDTTKWSNQGAMFTRQFSNMLQLARVITLGAYNRNESRGAHYKPDYPERNDDEWLKTTMAKHVSPYEAPEFEYQDVDVSLITPRKRDYSKKKVAK.

FAD-binding positions include 10 to 15 (GGGLAG) and 33 to 48 (SIVPVKRSHSVCAQGG). A Tele-8alpha-FAD histidine modification is found at His41. Residues His236 and Ser250 each contribute to the substrate site. Arg285 functions as the Proton acceptor in the catalytic mechanism. A substrate-binding site is contributed by His352. FAD is bound at residue Glu376. Residue Arg386 coordinates substrate. Residue 391–392 (SL) coordinates FAD.

The protein belongs to the FAD-dependent oxidoreductase 2 family. FRD/SDH subfamily. In terms of assembly, in B.subtilis succinate dehydrogenase forms part of an enzyme complex containing three subunits: a flavoprotein, an iron-sulfur protein and cytochrome b-558. Interacts with FloT. FAD is required as a cofactor.

It localises to the cell membrane. The protein localises to the membrane raft. It carries out the reaction a quinone + succinate = fumarate + a quinol. Its pathway is carbohydrate metabolism; tricarboxylic acid cycle; fumarate from succinate (bacterial route): step 1/1. The chain is Succinate dehydrogenase flavoprotein subunit (sdhA) from Bacillus subtilis (strain 168).